Here is a 761-residue protein sequence, read N- to C-terminus: BMP/retinoic acid-inducible neural-specific protein 1 (761 aa).

An N-terminal signal peptide occupies residues 1–22 (MNWRLVEFLYLLFIWDHILVQP). The MACPF domain maps to 68 to 251 (RYKIYREFAR…FVQSALSYIM (184 aa)). N-linked (GlcNAc...) asparagine glycans are attached at residues N156, N433, N443, N553, N599, N631, and N677.

The protein belongs to the BRINP family.

Its subcellular location is the cytoplasm. In terms of biological role, plays a role in neurogenesis and brain development. May suppress cell cycle progression in postmitotic neurons by inhibiting G1/S transition. This Gallus gallus (Chicken) protein is BMP/retinoic acid-inducible neural-specific protein 1 (BRINP1).